Consider the following 47-residue polypeptide: Potassium channel toxin TcoKIK (47 aa).

Residues 14-47 (EYACPAIDKFCEDHCAAKKAVGKCDDFKCNCIKL) form the BetaSPN-type CS-alpha/beta domain. 3 cysteine pairs are disulfide-bonded: cysteine 17–cysteine 37, cysteine 24–cysteine 42, and cysteine 28–cysteine 44.

This sequence belongs to the long chain scorpion toxin family. Class 2 subfamily. In terms of tissue distribution, expressed by the venom gland.

It is found in the secreted. It localises to the target cell membrane. Its function is as follows. Blocks voltage-gated potassium channels. Its application (10 uM) to cells recombinantly expressing channels results in membrane damage and cell lysis. The protein is Potassium channel toxin TcoKIK of Tityus costatus (Brazilian scorpion).